A 739-amino-acid polypeptide reads, in one-letter code: Double-strand break repair protein mus-23 (739 aa).

Positions 16, 18, 56, and 123 each coordinate Mn(2+). Residue histidine 124 is the Proton donor of the active site. Positions 212, 240, and 242 each coordinate Mn(2+). The tract at residues 516–739 (FDAGQHKQAQ…KPGLLARRLG (224 aa)) is disordered. Residues 523–532 (QAQRTKRFKR) are compositionally biased toward basic residues. Over residues 559 to 568 (VEPKGNDRPT) the composition is skewed to basic and acidic residues. The span at 599-636 (KRGAAAKTTAAAKKAAPGKKAAPAKKAAPAKKAAPAKK) shows a compositional bias: low complexity. Residues 637-646 (APARGRKKKT) show a composition bias toward basic residues. Residues 650 to 686 (DSDEEEEEDYPEDDDEEEEEADEEEEDVIMEDDEEDP) show a composition bias toward acidic residues. Residues 694 to 722 (KATSRVASTRASARATPVRATPARATQAR) are compositionally biased toward low complexity.

The protein belongs to the MRE11/RAD32 family. As to quaternary structure, component of the MRN complex composed of two heterodimers RAD50 and MRE11 associated with a single NBS1. Requires Mn(2+) as cofactor.

Its subcellular location is the nucleus. The protein localises to the chromosome. The protein resides in the telomere. In terms of biological role, core component of the MRN complex, which plays a central role in double-strand break (DSB) repair, DNA recombination, maintenance of telomere integrity and meiosis. The MRN complex is involved in the repair of DNA double-strand breaks (DSBs) via homologous recombination (HR), an error-free mechanism which primarily occurs during S and G2 phases. The complex (1) mediates the end resection of damaged DNA, which generates proper single-stranded DNA, a key initial steps in HR, and is (2) required for the recruitment of other repair factors and efficient activation of ATM and ATR upon DNA damage. Within the MRN complex, MRE11 possesses both single-strand endonuclease activity and double-strand-specific 3'-5' exonuclease activity. MRE11 first endonucleolytically cleaves the 5' strand at DNA DSB ends to prevent non-homologous end joining (NHEJ) and licence HR. It then generates a single-stranded DNA gap via 3' to 5' exonucleolytic degradation, which is required for single-strand invasion and recombination. The MRN complex is also required for the processing of R-loops. The chain is Double-strand break repair protein mus-23 (mus-23) from Neurospora crassa (strain ATCC 24698 / 74-OR23-1A / CBS 708.71 / DSM 1257 / FGSC 987).